Consider the following 204-residue polypeptide: CASP-like protein 2U2 (204 aa).

Residues Met1–Lys36 lie on the Cytoplasmic side of the membrane. Residues Gly37 to Leu57 form a helical membrane-spanning segment. The Extracellular segment spans residues Lys58–Ser84. A glycan (N-linked (GlcNAc...) asparagine) is linked at Asn77. A helical membrane pass occupies residues Leu85–Leu105. Residues Ser106 to Thr117 lie on the Cytoplasmic side of the membrane. Residues Val118–Ala138 traverse the membrane as a helical segment. Topologically, residues Ala139–His170 are extracellular. A helical membrane pass occupies residues Phe171–Ile191. At Ser192–Lys204 the chain is on the cytoplasmic side.

Belongs to the Casparian strip membrane proteins (CASP) family. Homodimer and heterodimers.

The protein localises to the cell membrane. The polypeptide is CASP-like protein 2U2 (Selaginella moellendorffii (Spikemoss)).